Here is a 317-residue protein sequence, read N- to C-terminus: Protein KlaC (317 aa).

Its function is as follows. Belongs to the kla operon, which is associated with cryptic tellurite resistance, and IncW plasmid fertility inhibition. This is Protein KlaC (klaC) from Escherichia coli.